A 283-amino-acid polypeptide reads, in one-letter code: Cyclin-C (283 aa).

A Cyclin N-terminal domain is found at 46 to 144 (NVIQALGEHL…ILECEFYLLE (99 aa)). Positions 252–283 (SILSKMPKPKPPPNSDGEQGTNGSQSSGYSQS) are disordered. Over residues 267-283 (DGEQGTNGSQSSGYSQS) the composition is skewed to polar residues.

It belongs to the cyclin family. Cyclin C subfamily. In terms of assembly, component of the Mediator complex. The cylin/CDK pair formed by ccnc/cdk8 also associates with the large subunit of RNA polymerase II.

It localises to the nucleus. Component of the Mediator complex, a coactivator involved in regulated gene transcription of nearly all RNA polymerase II-dependent genes. Mediator functions as a bridge to convey information from gene-specific regulatory proteins to the basal RNA polymerase II transcription machinery. Mediator is recruited to promoters by direct interactions with regulatory proteins and serves as a scaffold for the assembly of a functional preinitiation complex with RNA polymerase II and the general transcription factors. Binds to and activates cyclin-dependent kinase cdk8 that phosphorylates the CTD (C-terminal domain) of the large subunit of RNA polymerase II (RNAp II), which may inhibit the formation of a transcription initiation complex. This chain is Cyclin-C (ccnc), found in Xenopus laevis (African clawed frog).